A 174-amino-acid chain; its full sequence is Chorismate pyruvate-lyase (174 aa).

Substrate is bound by residues M36, R78, L116, and E157.

It belongs to the UbiC family. As to quaternary structure, monomer.

It localises to the cytoplasm. It carries out the reaction chorismate = 4-hydroxybenzoate + pyruvate. Its pathway is cofactor biosynthesis; ubiquinone biosynthesis. Its function is as follows. Removes the pyruvyl group from chorismate, with concomitant aromatization of the ring, to provide 4-hydroxybenzoate (4HB) for the ubiquinone pathway. This Serratia proteamaculans (strain 568) protein is Chorismate pyruvate-lyase.